A 579-amino-acid polypeptide reads, in one-letter code: Insulin-like growth factor 2 mRNA-binding protein 3 (579 aa).

2 RRM domains span residues 2 to 75 (NKLY…HSVP) and 81 to 156 (RKLQ…YIPD). The disordered stretch occupies residues 158-192 (TAAQQNPSPQLRGRRGPGQRGSSRQASPGSVSKQK). Phosphoserine is present on S165. Position 184 is a phosphoserine; by MTOR (S184). KH domains follow at residues 195 to 260 (DLPL…CKSI), 276 to 343 (EIPL…EEEI), and 405 to 470 (TETV…QGRI). Glycyl lysine isopeptide (Lys-Gly) (interchain with G-Cter in SUMO2) cross-links involve residues K450 and K475. The KH 4 domain occupies 487-553 (KLEAHIRVPS…YACQVAQRKI (67 aa)). T528 is subject to Phosphothreonine.

Belongs to the RRM IMP/VICKZ family. As to quaternary structure, can form homooligomers and heterooligomers with IGF2BP1 and IGF2BP3 in an RNA-dependent manner. Interacts with IGF2BP1. Interacts with ELAVL1, DHX9, HNRNPU, MATR3 and PABPC1. As to expression, expressed in oocytes, spermatogonia and spermatocytes (at protein level).

It localises to the nucleus. Its subcellular location is the cytoplasm. The protein resides in the P-body. The protein localises to the stress granule. In terms of biological role, RNA-binding factor that may recruit target transcripts to cytoplasmic protein-RNA complexes (mRNPs). This transcript 'caging' into mRNPs allows mRNA transport and transient storage. It also modulates the rate and location at which target transcripts encounter the translational apparatus and shields them from endonuclease attacks or microRNA-mediated degradation. Preferentially binds to N6-methyladenosine (m6A)-containing mRNAs and increases their stability. Binds to the 3'-UTR of CD44 mRNA and stabilizes it, hence promotes cell adhesion and invadopodia formation. Binds to beta-actin/ACTB and MYC transcripts. Increases MYC mRNA stability by binding to the coding region instability determinant (CRD) and binding is enhanced by m6A-modification of the CRD. Binds to the 5'-UTR of the insulin-like growth factor 2 (IGF2) mRNAs. This is Insulin-like growth factor 2 mRNA-binding protein 3 (Igf2bp3) from Mus musculus (Mouse).